Reading from the N-terminus, the 165-residue chain is Large ribosomal subunit protein uL10 (165 aa).

The protein belongs to the universal ribosomal protein uL10 family. As to quaternary structure, part of the ribosomal stalk of the 50S ribosomal subunit. The N-terminus interacts with L11 and the large rRNA to form the base of the stalk. The C-terminus forms an elongated spine to which L12 dimers bind in a sequential fashion forming a multimeric L10(L12)X complex.

In terms of biological role, forms part of the ribosomal stalk, playing a central role in the interaction of the ribosome with GTP-bound translation factors. This is Large ribosomal subunit protein uL10 from Shewanella pealeana (strain ATCC 700345 / ANG-SQ1).